We begin with the raw amino-acid sequence, 207 residues long: Large ribosomal subunit protein bL25 (207 aa).

Belongs to the bacterial ribosomal protein bL25 family. CTC subfamily. Part of the 50S ribosomal subunit; part of the 5S rRNA/L5/L18/L25 subcomplex. Contacts the 5S rRNA. Binds to the 5S rRNA independently of L5 and L18.

Functionally, this is one of the proteins that binds to the 5S RNA in the ribosome where it forms part of the central protuberance. This Orientia tsutsugamushi (strain Ikeda) (Rickettsia tsutsugamushi) protein is Large ribosomal subunit protein bL25.